A 198-amino-acid polypeptide reads, in one-letter code: MAEKQTAKRNRREEILQSLALMLESSDGSQRITTAKLAASVGVSEAALYRHFPSKTRMFDSLIEFIEDSLITRINLILKDEKDTSTRLRLIVLLILGFGERNPGLTRILTGHALMFEQDRLQGRINQLFERIEAQLRQVLREKRMREGEGYTTDKNLLASQLLAFCEGMLSRFVRSEFKYRPTDDFDARWPLIAAQLQ.

The HTH tetR-type domain maps to 10–70 (NRREEILQSL…SLIEFIEDSL (61 aa)). Positions 33 to 52 (TTAKLAASVGVSEAALYRHF) form a DNA-binding region, H-T-H motif. A coiled-coil region spans residues 117–144 (EQDRLQGRINQLFERIEAQLRQVLREKR).

The protein belongs to the nucleoid occlusion factor SlmA family. Homodimer. Interacts with FtsZ.

The protein localises to the cytoplasm. Its subcellular location is the nucleoid. Functionally, required for nucleoid occlusion (NO) phenomenon, which prevents Z-ring formation and cell division over the nucleoid. Acts as a DNA-associated cell division inhibitor that binds simultaneously chromosomal DNA and FtsZ, and disrupts the assembly of FtsZ polymers. SlmA-DNA-binding sequences (SBS) are dispersed on non-Ter regions of the chromosome, preventing FtsZ polymerization at these regions. This is Nucleoid occlusion factor SlmA from Salmonella typhi.